Here is an 83-residue protein sequence, read N- to C-terminus: Carboxysome shell vertex protein CsoS4A (83 aa).

Positions 1 to 78 (MKIMQVEKTL…SDLTIIGIID (78 aa)) constitute a BMV domain.

The protein belongs to the CcmL/EutN family. CsoS4 subfamily. Homopentamer.

The protein resides in the carboxysome. Functionally, probably forms vertices in the carboxysome, a polyhedral inclusion where RuBisCO (ribulose bisphosphate carboxylase, cbbL-cbbS) is sequestered. Has been modeled to induce curvature upon insertion into an otherwise flat hexagonal layer of major carboxysome subunits. A minor shell protein, only 12 pentamers of CsoS4A/CsoS4B are calculated to be present in each carboxysome. The 2 CsoS4 proteins contribute to the impermeability of the carboxysome to CO(2). Its function is as follows. Unlike beta-carboxysomes, alpha-carboxysomes (Cb) can form without cargo protein. CsoS2 is essential for Cb formation and is also capable of targeting foreign proteins to the Cb. The Cb shell assembles with the aid of CsoS2; CsoS1A, CsoS1B and CsoS1C form the majority of the shell while CsoS4A and CsoS4B form vertices. CsoS1D forms pseudohexamers that probably control metabolite flux into and out of the shell. The sequence is that of Carboxysome shell vertex protein CsoS4A from Halothiobacillus neapolitanus (strain ATCC 23641 / c2) (Thiobacillus neapolitanus).